We begin with the raw amino-acid sequence, 217 residues long: tRNA (guanine-N(7)-)-methyltransferase (217 aa).

Positions 48, 73, 100, and 123 each coordinate S-adenosyl-L-methionine. Asp123 is an active-site residue. Substrate is bound by residues Lys127 and Asp159.

The protein belongs to the class I-like SAM-binding methyltransferase superfamily. TrmB family.

It carries out the reaction guanosine(46) in tRNA + S-adenosyl-L-methionine = N(7)-methylguanosine(46) in tRNA + S-adenosyl-L-homocysteine. It functions in the pathway tRNA modification; N(7)-methylguanine-tRNA biosynthesis. In terms of biological role, catalyzes the formation of N(7)-methylguanine at position 46 (m7G46) in tRNA. The polypeptide is tRNA (guanine-N(7)-)-methyltransferase (Leptospira borgpetersenii serovar Hardjo-bovis (strain JB197)).